We begin with the raw amino-acid sequence, 135 residues long: NADH-quinone oxidoreductase subunit K (135 aa).

3 helical membrane passes run 33–53 (VLGL…FAIG), 63–83 (FLFM…AFVV), and 95–115 (IMFI…LAIL).

Belongs to the complex I subunit 4L family. As to quaternary structure, NDH-1 is composed of 14 different subunits. Subunits NuoA, H, J, K, L, M, N constitute the membrane sector of the complex.

The protein resides in the cell inner membrane. The enzyme catalyses a quinone + NADH + 5 H(+)(in) = a quinol + NAD(+) + 4 H(+)(out). Functionally, NDH-1 shuttles electrons from NADH, via FMN and iron-sulfur (Fe-S) centers, to quinones in the respiratory chain. The immediate electron acceptor for the enzyme in this species is believed to be ubiquinone. Couples the redox reaction to proton translocation (for every two electrons transferred, four hydrogen ions are translocated across the cytoplasmic membrane), and thus conserves the redox energy in a proton gradient. This chain is NADH-quinone oxidoreductase subunit K, found in Psychrobacter arcticus (strain DSM 17307 / VKM B-2377 / 273-4).